The primary structure comprises 277 residues: Large ribosomal subunit protein uL2 (277 aa).

The disordered stretch occupies residues 225-277 (AMNPVDHPHGGGEGKTSGGRHPVSPWGRPEGKTRRANKPSDRFIIRRKSRKRR). Over residues 253–268 (PEGKTRRANKPSDRFI) the composition is skewed to basic and acidic residues.

The protein belongs to the universal ribosomal protein uL2 family. In terms of assembly, part of the 50S ribosomal subunit. Forms a bridge to the 30S subunit in the 70S ribosome.

In terms of biological role, one of the primary rRNA binding proteins. Required for association of the 30S and 50S subunits to form the 70S ribosome, for tRNA binding and peptide bond formation. It has been suggested to have peptidyltransferase activity; this is somewhat controversial. Makes several contacts with the 16S rRNA in the 70S ribosome. This chain is Large ribosomal subunit protein uL2, found in Tropheryma whipplei (strain TW08/27) (Whipple's bacillus).